A 91-amino-acid chain; its full sequence is Gene 76 protein (91 aa).

Positions 58–81 (ELPSCDESPKGEARRDNDNRDGGK) are disordered.

This Mycobacterium phage L5 (Mycobacteriophage L5) protein is Gene 76 protein (76).